We begin with the raw amino-acid sequence, 550 residues long: Glucose-6-phosphate isomerase 1 (550 aa).

Glutamate 353 (proton donor) is an active-site residue. Active-site residues include histidine 384 and lysine 512.

Belongs to the GPI family.

It is found in the cytoplasm. It carries out the reaction alpha-D-glucose 6-phosphate = beta-D-fructose 6-phosphate. It functions in the pathway carbohydrate biosynthesis; gluconeogenesis. The protein operates within carbohydrate degradation; glycolysis; D-glyceraldehyde 3-phosphate and glycerone phosphate from D-glucose: step 2/4. In terms of biological role, catalyzes the reversible isomerization of glucose-6-phosphate to fructose-6-phosphate. The polypeptide is Glucose-6-phosphate isomerase 1 (Thiobacillus denitrificans (strain ATCC 25259 / T1)).